The chain runs to 270 residues: Elongation factor Ts (270 aa).

An involved in Mg(2+) ion dislocation from EF-Tu region spans residues 81 to 84 (TDFV).

Belongs to the EF-Ts family.

It is found in the cytoplasm. In terms of biological role, associates with the EF-Tu.GDP complex and induces the exchange of GDP to GTP. It remains bound to the aminoacyl-tRNA.EF-Tu.GTP complex up to the GTP hydrolysis stage on the ribosome. The polypeptide is Elongation factor Ts (Wigglesworthia glossinidia brevipalpis).